The chain runs to 495 residues: Maturase K (495 aa).

This sequence belongs to the intron maturase 2 family. MatK subfamily.

The protein localises to the plastid. It is found in the chloroplast. Functionally, usually encoded in the trnK tRNA gene intron. Probably assists in splicing its own and other chloroplast group II introns. The polypeptide is Maturase K (Torreya californica (California nutmeg)).